Consider the following 182-residue polypeptide: Large ribosomal subunit protein uL22 (182 aa).

Residues 155 to 182 (SGVDGAKQGKKKKKTDGVEKATTKRQKQ) are disordered.

Belongs to the universal ribosomal protein uL22 family.

This Carabus granulatus (Ground beetle) protein is Large ribosomal subunit protein uL22 (RpL17).